The sequence spans 415 residues: Peptide chain release factor subunit 1 (415 aa).

This sequence belongs to the eukaryotic release factor 1 family. Heterodimer of two subunits, one of which binds GTP.

It localises to the cytoplasm. Functionally, directs the termination of nascent peptide synthesis (translation) in response to the termination codons UAA, UAG and UGA. The chain is Peptide chain release factor subunit 1 from Thermococcus onnurineus (strain NA1).